Reading from the N-terminus, the 664-residue chain is Armadillo repeat protein involved in nucleocytoplasmic transport Syo2 (664 aa).

The stretch at 77 to 119 is one ARM repeat; sequence GLVSKLIDRISDDSVEVVVEATGALRNLAIEEGYSICMDMYRK.

It belongs to the nuclear import and ribosome assembly adapter family. As to quaternary structure, forms a heterotrimeric complex with rpl5 and rpl11a or rpl11b; interaction of this complex with kap104 allows the nuclear import of the heterotrimer. Component of a hexameric 5S RNP precursor complex; this complex acts as a precursor for ribosome assembly.

The protein resides in the cytoplasm. Its subcellular location is the nucleus. In terms of biological role, nuclear import adapter that specifically recruits the two functionally and topologically linked ribosomal proteins rpl5 and rpl11 (encoded by rpl11a and rpl11b). Guarantees that this cargo pair remains bound together from the time of synthesis in the cytoplasm until delivery to the nascent 5S rRNA in the nucleus. This chain is Armadillo repeat protein involved in nucleocytoplasmic transport Syo2, found in Schizosaccharomyces pombe (strain 972 / ATCC 24843) (Fission yeast).